The following is a 292-amino-acid chain: tRNA pseudouridine synthase B (292 aa).

The Nucleophile role is filled by aspartate 40.

It belongs to the pseudouridine synthase TruB family. Type 1 subfamily.

It catalyses the reaction uridine(55) in tRNA = pseudouridine(55) in tRNA. In terms of biological role, responsible for synthesis of pseudouridine from uracil-55 in the psi GC loop of transfer RNAs. This is tRNA pseudouridine synthase B from Mycoplasma mycoides subsp. mycoides SC (strain CCUG 32753 / NCTC 10114 / PG1).